We begin with the raw amino-acid sequence, 86 residues long: Large ribosomal subunit protein bL31B (86 aa).

Belongs to the bacterial ribosomal protein bL31 family. Type B subfamily. In terms of assembly, part of the 50S ribosomal subunit.

This chain is Large ribosomal subunit protein bL31B, found in Streptococcus agalactiae serotype Ia (strain ATCC 27591 / A909 / CDC SS700).